A 76-amino-acid chain; its full sequence is UPF0154 protein LCA_1273 (76 aa).

A helical membrane pass occupies residues 3-23 (IGIGVLIFVIGALLGAVAGFF). The segment at 55–76 (PSEKKLNQMMSSMKAQQKRSKK) is disordered.

The protein belongs to the UPF0154 family.

It is found in the cell membrane. The chain is UPF0154 protein LCA_1273 from Latilactobacillus sakei subsp. sakei (strain 23K) (Lactobacillus sakei subsp. sakei).